The chain runs to 270 residues: 3-methyl-2-oxobutanoate hydroxymethyltransferase (270 aa).

The Mg(2+) site is built by Asp-42 and Asp-86. 3-methyl-2-oxobutanoate is bound by residues 42–43, Asp-86, and Lys-116; that span reads DS. Glu-118 is a binding site for Mg(2+). Glu-185 functions as the Proton acceptor in the catalytic mechanism.

This sequence belongs to the PanB family. Homodecamer; pentamer of dimers. Requires Mg(2+) as cofactor.

It localises to the cytoplasm. The catalysed reaction is 3-methyl-2-oxobutanoate + (6R)-5,10-methylene-5,6,7,8-tetrahydrofolate + H2O = 2-dehydropantoate + (6S)-5,6,7,8-tetrahydrofolate. It participates in cofactor biosynthesis; (R)-pantothenate biosynthesis; (R)-pantoate from 3-methyl-2-oxobutanoate: step 1/2. Functionally, catalyzes the reversible reaction in which hydroxymethyl group from 5,10-methylenetetrahydrofolate is transferred onto alpha-ketoisovalerate to form ketopantoate. The protein is 3-methyl-2-oxobutanoate hydroxymethyltransferase of Synechococcus sp. (strain CC9902).